The primary structure comprises 413 residues: N-acylneuraminate cytidylyltransferase (413 aa).

It belongs to the CMP-NeuNAc synthase family. Mg(2+) is required as a cofactor. Mn(2+) serves as cofactor.

The protein localises to the cytoplasm. The enzyme catalyses an N-acylneuraminate + CTP = a CMP-N-acyl-beta-neuraminate + diphosphate. Catalyzes the formation of CMP-N-acetylneuraminic acid (CMP-NeuNAc), which is essential for the formation of the capsule. This Streptococcus agalactiae serotype V (strain ATCC BAA-611 / 2603 V/R) protein is N-acylneuraminate cytidylyltransferase (neuA).